The following is a 416-amino-acid chain: Glutamyl-tRNA reductase (416 aa).

Residues 49–52 (TCNR), serine 105, 110–112 (EPQ), and glutamine 116 each bind substrate. Catalysis depends on cysteine 50, which acts as the Nucleophile. 185 to 190 (GAGETI) is a binding site for NADP(+).

The protein belongs to the glutamyl-tRNA reductase family. Homodimer.

The enzyme catalyses (S)-4-amino-5-oxopentanoate + tRNA(Glu) + NADP(+) = L-glutamyl-tRNA(Glu) + NADPH + H(+). It participates in porphyrin-containing compound metabolism; protoporphyrin-IX biosynthesis; 5-aminolevulinate from L-glutamyl-tRNA(Glu): step 1/2. In terms of biological role, catalyzes the NADPH-dependent reduction of glutamyl-tRNA(Glu) to glutamate 1-semialdehyde (GSA). This is Glutamyl-tRNA reductase from Shewanella sediminis (strain HAW-EB3).